Consider the following 137-residue polypeptide: Interferon-induced transmembrane protein 3 (137 aa).

Over 1–57 (MNHTSQAFITAASGGQPPNYERIKEEYEVAEMGAPHGSASVRTTVINMPREVSVPDH) the chain is Cytoplasmic. Phosphotyrosine is present on Tyr-20. A Glycyl lysine isopeptide (Lys-Gly) (interchain with G-Cter in ubiquitin) cross-link involves residue Lys-24. Tyr-27 carries the post-translational modification Phosphotyrosine. The segment at residues 58–78 (VVWSLFNTLFMNFCCLGFIAY) is an intramembrane region (helical). Positions 60–93 (WSLFNTLFMNFCCLGFIAYAYSVKSRDRKMVGDV) are interaction with SPP1. Residues Cys-71 and Cys-72 are each lipidated (S-palmitoyl cysteine). Residues 79–109 (AYSVKSRDRKMVGDVTGAQAYASTAKCLNIS) lie on the Cytoplasmic side of the membrane. Residues Lys-83, Lys-88, and Lys-104 each participate in a glycyl lysine isopeptide (Lys-Gly) (interchain with G-Cter in ubiquitin) cross-link. Cys-105 carries S-palmitoyl cysteine lipidation. The interval 108 to 133 (ISTLVLSILMVVITIVSVIIIVLNAQ) is interaction with VAPA. Residues 110–130 (TLVLSILMVVITIVSVIIIVL) form a helical membrane-spanning segment. Topologically, residues 131 to 137 (NAQNLHT) are extracellular.

This sequence belongs to the CD225/Dispanin family. In terms of assembly, interacts with ATP6V0B. Interacts with CD81. Interacts with SPP1; the interaction reduces OPN expression. Interacts with BRI3. In terms of processing, polyubiquitinated with both 'Lys-48' and 'Lys-63' linkages. Ubiquitination negatively regulates antiviral activity. Lys-24 is the most prevalent ubiquitination site. Phosphorylation at Tyr-20 is required for endosomal and lysosomal location. As to expression, expressed in acinar cell. Predominantly expressed in nascent primordial germ cells, as well as in gonadal germ cells.

It localises to the cell membrane. Its subcellular location is the late endosome membrane. The protein localises to the early endosome membrane. It is found in the lysosome membrane. The protein resides in the cytoplasm. It localises to the perinuclear region. Functionally, IFN-induced antiviral protein which disrupts intracellular cholesterol homeostasis. Inhibits the entry of viruses to the host cell cytoplasm by preventing viral fusion with cholesterol depleted endosomes. May inactivate new enveloped viruses which buds out of the infected cell, by letting them go out with a cholesterol depleted membrane. Active against multiple viruses, including influenza A virus, SARS coronaviruses (SARS-CoV and SARS-CoV-2), Marburg virus (MARV), Ebola virus (EBOV), Dengue virus (DNV), West Nile virus (WNV), human immunodeficiency virus type 1 (HIV-1), hepatitis C virus (HCV) and vesicular stomatitis virus (VSV). Can inhibit: influenza virus hemagglutinin protein-mediated viral entry, MARV and EBOV GP1,2-mediated viral entry, SARS-CoV and SARS-CoV-2 S protein-mediated viral entry and VSV G protein-mediated viral entry. Plays a critical role in the structural stability and function of vacuolar ATPase (v-ATPase). Establishes physical contact with the v-ATPase of endosomes which is critical for proper clathrin localization and is also required for the function of the v-ATPase to lower the pH in phagocytic endosomes thus establishing an antiviral state. In hepatocytes, IFITM proteins act in a coordinated manner to restrict HCV infection by targeting the endocytosed HCV virion for lysosomal degradation. IFITM2 and IFITM3 display anti-HCV activity that may complement the anti-HCV activity of IFITM1 by inhibiting the late stages of HCV entry, possibly in a coordinated manner by trapping the virion in the endosomal pathway and targeting it for degradation at the lysosome. Exerts opposing activities on SARS-CoV-2, including amphipathicity-dependent restriction of virus at endosomes and amphipathicity-independent enhancement of infection at the plasma membrane. This Mus musculus (Mouse) protein is Interferon-induced transmembrane protein 3.